The following is a 564-amino-acid chain: R-linalool synthase (564 aa).

Residues Asp-320, Asp-324, Asp-464, Thr-468, and Glu-472 each contribute to the Mg(2+) site. The DDXXD motif signature appears at Asp-320–Asp-324.

Belongs to the terpene synthase family. The cofactor is Mg(2+). Requires Mn(2+) as cofactor.

It carries out the reaction (2E)-geranyl diphosphate + H2O = (R)-linalool + diphosphate. Its function is as follows. Specifically catalyzes production of (R)-(-)-linalool, the main component of lavender essential oil. The sequence is that of R-linalool synthase from Lavandula angustifolia (Lavender).